A 655-amino-acid polypeptide reads, in one-letter code: Bifunctional lysine-specific demethylase and histidyl-hydroxylase NO66 (655 aa).

Residues 1–16 are compositionally biased toward polar residues; the sequence is MEKVTNSAAAKPQGNN. Disordered stretches follow at residues 1–48 and 67–122; these read MEKV…LSDM and EDTD…QGAS. Residues 76-86 show a composition bias toward low complexity; the sequence is STSSKEAAAAK. Residues 87-96 show a composition bias toward basic and acidic residues; sequence TADHERRLQA. Ser-131 carries the post-translational modification Phosphoserine. Thr-137 is subject to Phosphothreonine. Phosphoserine is present on Ser-138. The segment at 185–210 is disordered; the sequence is KAPEEGNNNNDEKEMSTETSEPHKTD. Positions 194-210 are enriched in basic and acidic residues; that stretch reads NDEKEMSTETSEPHKTD. A JmjC domain is found at 307–452; it reads CSIRLLHASA…NLLETLMPMV (146 aa). Residues His-353, Asp-355, and His-418 each contribute to the Fe cation site.

The protein belongs to the ROX family. NO66 subfamily. It depends on Fe(2+) as a cofactor.

The protein localises to the nucleus. It carries out the reaction N(6),N(6)-dimethyl-L-lysyl(36)-[histone H3] + 2 2-oxoglutarate + 2 O2 = L-lysyl(36)-[histone H3] + 2 formaldehyde + 2 succinate + 2 CO2. Functionally, oxygenase that can act as both a histone lysine demethylase and a ribosomal histidine hydroxylase. Specifically demethylates 'Lys-4' (H3K4me) and 'Lys-36' (H3K36me) of histone H3, thereby playing a central role in histone code. This Drosophila sechellia (Fruit fly) protein is Bifunctional lysine-specific demethylase and histidyl-hydroxylase NO66.